Here is a 489-residue protein sequence, read N- to C-terminus: Rhamnulokinase (489 aa).

13-17 (ASSGR) serves as a coordination point for ATP. Cys68 and Cys222 are joined by a disulfide. Substrate-binding positions include Gly83 and 236 to 238 (HDT). Residue Asp237 is the Proton acceptor of the active site. ATP is bound at residue Thr259. Asn296 contributes to the substrate binding site. ATP is bound at residue Gln304. Cys353 and Cys370 form a disulfide bridge. ATP is bound at residue Gly402. Cysteines 413 and 417 form a disulfide.

The protein belongs to the rhamnulokinase family. Monomer. Mg(2+) serves as cofactor.

It carries out the reaction L-rhamnulose + ATP = L-rhamnulose 1-phosphate + ADP + H(+). It functions in the pathway carbohydrate degradation; L-rhamnose degradation; glycerone phosphate from L-rhamnose: step 2/3. Involved in the catabolism of L-rhamnose (6-deoxy-L-mannose). Catalyzes the transfer of the gamma-phosphate group from ATP to the 1-hydroxyl group of L-rhamnulose to yield L-rhamnulose 1-phosphate. In Escherichia coli O17:K52:H18 (strain UMN026 / ExPEC), this protein is Rhamnulokinase.